A 385-amino-acid polypeptide reads, in one-letter code: Glutamate 5-kinase (385 aa).

Lys-17 provides a ligand contact to ATP. The substrate site is built by Ser-64, Asp-151, and Asn-165. 185–186 (SD) serves as a coordination point for ATP. Positions 291-367 (SGTVRVDAGA…NQIDNILGYN (77 aa)) constitute a PUA domain.

It belongs to the glutamate 5-kinase family.

The protein resides in the cytoplasm. It catalyses the reaction L-glutamate + ATP = L-glutamyl 5-phosphate + ADP. Its pathway is amino-acid biosynthesis; L-proline biosynthesis; L-glutamate 5-semialdehyde from L-glutamate: step 1/2. Functionally, catalyzes the transfer of a phosphate group to glutamate to form L-glutamate 5-phosphate. The protein is Glutamate 5-kinase of Methanosarcina acetivorans (strain ATCC 35395 / DSM 2834 / JCM 12185 / C2A).